Here is a 452-residue protein sequence, read N- to C-terminus: GTPase Der (452 aa).

EngA-type G domains follow at residues 4–169 (PIVA…PAPQ) and 177–352 (IKVA…QEHR). GTP contacts are provided by residues 10–17 (GRPNVGKS), 57–61 (DTGGL), 120–123 (NKCE), 183–190 (GRPNVGKS), 230–234 (DTAGI), and 295–298 (NKWD). The region spanning 353 to 439 (RRVTTAVINE…IRLFWRGKKV (87 aa)) is the KH-like domain.

Belongs to the TRAFAC class TrmE-Era-EngA-EngB-Septin-like GTPase superfamily. EngA (Der) GTPase family. In terms of assembly, associates with the 50S ribosomal subunit.

Functionally, GTPase that plays an essential role in the late steps of ribosome biogenesis. The chain is GTPase Der from Synechocystis sp. (strain ATCC 27184 / PCC 6803 / Kazusa).